The sequence spans 549 residues: LLTGNGLTSLPPSLAVAEQEASVTSLTTKRYILRFPALETLMLDDNKLSNPNCFVSLAGLKRLKKLSLDQNRIFRIPYLQQVQLRDGSGDWVGGRGSPRKQPQSMLQSKSWIYEASDDQPDYTILPMKKDVDRTEVVFSSYPGFSTSETTKVCALPPIFAILPVALFPSLCELIFHNNPLVAHTRGVPPLLKSFLQERVGIHLIRRKIVKAKHHILMPRKDSRKVKTQVPKVPKQPMILPHPSVMIKSPSKEMLESEAELTTEPPPTKTISVEREMPIEGLGGPPMPHRTFVPLPPICSDSTVHSEETSPRSDAAGRLSADQLSDEDTKSTESIFLTQVSGLSSSIFQRDDSEIKEKEQRPPSTAPREAKRTQKKPPSASFPRKYHGYEELLTAKPDRPCSTCVKHPLVYRSSKPRLDTLQKHYVPKEKRTRRIPVPPRRKTRAQLLDDILIRMRDTQNITEAPLGAVLRQRTEQRLVNQKQFLEAKKLLKEFRARYRRLVRCSLRSVFGTTAPPQARPALSGSQPKLGRFLEFMDEFYQEPTASDLKG.

LRR repeat units lie at residues 37-58 (ALET…VSLA) and 62-83 (RLKK…QQVQ). 3 disordered regions span residues 221 to 242 (DSRK…LPHP), 277 to 329 (PIEG…EDTK), and 347 to 384 (FQRD…FPRK). The segment covering 227–236 (TQVPKVPKQP) has biased composition (low complexity). The span at 348-360 (QRDDSEIKEKEQR) shows a compositional bias: basic and acidic residues. Residues 480–500 (QKQFLEAKKLLKEFRARYRRL) adopt a coiled-coil conformation.

It is found in the cytoplasm. Its subcellular location is the nucleus. In terms of biological role, may be involved in the response of cells to X-ray radiation. The protein is X-ray radiation resistance-associated protein 1 of Bos taurus (Bovine).